Reading from the N-terminus, the 256-residue chain is Small ribosomal subunit protein eS1 (256 aa).

A compositionally biased stretch (basic residues) spans 1–18; sequence MAVGKNKRLSKGKKGLKK. A disordered region spans residues 1 to 20; the sequence is MAVGKNKRLSKGKKGLKKRT. Position 2 is an N-acetylalanine; partial (Ala-2).

It belongs to the eukaryotic ribosomal protein eS1 family. Component of the small ribosomal subunit. Mature ribosomes consist of a small (40S) and a large (60S) subunit. The 40S subunit contains about 33 different proteins and 1 molecule of RNA (18S). The 60S subunit contains about 49 different proteins and 3 molecules of RNA (25S, 5.8S and 5S).

The protein resides in the cytoplasm. This chain is Small ribosomal subunit protein eS1 (rps1), found in Talaromyces stipitatus (strain ATCC 10500 / CBS 375.48 / QM 6759 / NRRL 1006) (Penicillium stipitatum).